We begin with the raw amino-acid sequence, 545 residues long: CTP synthase (545 aa).

The tract at residues Met1–Leu265 is amidoligase domain. Ser13 is a binding site for CTP. Ser13 is a UTP binding site. ATP contacts are provided by residues Ser14–Ile19 and Asp71. 2 residues coordinate Mg(2+): Asp71 and Glu139. CTP is bound by residues Asp146–Glu148, Lys186–Gln191, and Lys222. UTP is bound by residues Lys186–Gln191 and Lys222. In terms of domain architecture, Glutamine amidotransferase type-1 spans Lys290–Ser544. Residue Gly355 coordinates L-glutamine. The Nucleophile; for glutamine hydrolysis role is filled by Cys382. L-glutamine is bound by residues Leu383–Gln386, Glu406, and Arg473. Residues His517 and Glu519 contribute to the active site.

This sequence belongs to the CTP synthase family. As to quaternary structure, homotetramer.

The enzyme catalyses UTP + L-glutamine + ATP + H2O = CTP + L-glutamate + ADP + phosphate + 2 H(+). The catalysed reaction is L-glutamine + H2O = L-glutamate + NH4(+). It catalyses the reaction UTP + NH4(+) + ATP = CTP + ADP + phosphate + 2 H(+). It participates in pyrimidine metabolism; CTP biosynthesis via de novo pathway; CTP from UDP: step 2/2. Its activity is regulated as follows. Allosterically activated by GTP, when glutamine is the substrate; GTP has no effect on the reaction when ammonia is the substrate. The allosteric effector GTP functions by stabilizing the protein conformation that binds the tetrahedral intermediate(s) formed during glutamine hydrolysis. Inhibited by the product CTP, via allosteric rather than competitive inhibition. Catalyzes the ATP-dependent amination of UTP to CTP with either L-glutamine or ammonia as the source of nitrogen. Regulates intracellular CTP levels through interactions with the four ribonucleotide triphosphates. This chain is CTP synthase, found in Nautilia profundicola (strain ATCC BAA-1463 / DSM 18972 / AmH).